Here is a 483-residue protein sequence, read N- to C-terminus: Regulatory protein ViaA (483 aa).

Belongs to the ViaA family. Homodimer. Interacts with RavA.

Its subcellular location is the cytoplasm. Functionally, component of the RavA-ViaA chaperone complex, which may act on the membrane to optimize the function of some of the respiratory chains. ViaA stimulates the ATPase activity of RavA. This chain is Regulatory protein ViaA, found in Salmonella paratyphi A (strain ATCC 9150 / SARB42).